The primary structure comprises 465 residues: Trigger factor (465 aa).

A PPIase FKBP-type domain is found at 160 to 235 (ADQVTIQELG…VVEVSSKKLQ (76 aa)). The tract at residues 412 to 465 (QLSGEGQSTEAASPKATGTEAAGTEQSEPAQTETAQNDAGQTETAQSEGEQQSE) is disordered. Residues 435 to 465 (TEQSEPAQTETAQNDAGQTETAQSEGEQQSE) show a composition bias toward polar residues.

The protein belongs to the FKBP-type PPIase family. Tig subfamily. As to quaternary structure, binds to the 50S ribosomal subunit via interactions with ribosomal protein L23. Also interacts with 23S rRNA and proteins L24 and L29 when complexed with the ribosome.

The protein localises to the cytoplasm. It catalyses the reaction [protein]-peptidylproline (omega=180) = [protein]-peptidylproline (omega=0). Functionally, involved in protein export. Acts as a chaperone by maintaining the newly synthesized protein in an open conformation. Functions as a peptidyl-prolyl cis-trans isomerase. Probably changes conformation upon binding to the ribosome (maybe in particular due to interaction with L24), exposing a hydrophobic crevice that is probably important for its chaperone activity. In Deinococcus radiodurans (strain ATCC 13939 / DSM 20539 / JCM 16871 / CCUG 27074 / LMG 4051 / NBRC 15346 / NCIMB 9279 / VKM B-1422 / R1), this protein is Trigger factor (tig).